A 339-amino-acid polypeptide reads, in one-letter code: Transcription initiation factor IIB (339 aa).

The TFIIB-type zinc finger occupies 39-70; it reads EELICPVCGSKNIIKDYERAEIVCEMCGCVLQ. Residues Cys43, Cys46, Cys62, and Cys65 each coordinate Zn(2+). Repeat copies occupy residues 156–239 and 250–331.

The protein belongs to the TFIIB family.

In terms of biological role, stabilizes TBP binding to an archaeal box-A promoter. Also responsible for recruiting RNA polymerase II to the pre-initiation complex (DNA-TBP-TFIIB). This chain is Transcription initiation factor IIB, found in Methanococcus maripaludis (strain C7 / ATCC BAA-1331).